A 227-amino-acid chain; its full sequence is YEATS domain-containing protein 4 (227 aa).

One can recognise a YEATS domain in the interval 15-158 (RVKGVTIVKP…AMMQQLLTTS (144 aa)). Lys37 participates in a covalent cross-link: Glycyl lysine isopeptide (Lys-Gly) (interchain with G-Cter in SUMO2). Residues 93 to 97 (WGEFE) are diacetylated histone H3 binding. Residues 163 to 227 (LGAYKHETEF…LEEDDQAKDI (65 aa)) form an interaction with MLLT10 region. Residues 168–227 (HETEFAELEVKTREKLEAAKKKTSFEIAELKERLKASRETINCLKNEIRKLEEDDQAKDI) are interaction with TACC1. A coiled-coil region spans residues 178–226 (KTREKLEAAKKKTSFEIAELKERLKASRETINCLKNEIRKLEEDDQAKD).

In terms of assembly, component of numerous complexes with chromatin remodeling and histone acetyltransferase activity. Component of the NuA4 histone acetyltransferase complex which contains the catalytic subunit KAT5/TIP60 and the subunits EP400, TRRAP/PAF400, BRD8/SMAP, EPC1, DMAP1/DNMAP1, RUVBL1/TIP49, RUVBL2, ING3, actin, ACTL6A/BAF53A, MORF4L1/MRG15, MORF4L2/MRGX, MRGBP, YEATS4/GAS41, VPS72/YL1 and MEAF6. The NuA4 complex interacts with MYC and the adenovirus E1A protein. Component of a NuA4-related complex which contains EP400, TRRAP/PAF400, SRCAP, BRD8/SMAP, EPC1, DMAP1/DNMAP1, RUVBL1/TIP49, RUVBL2, actin, ACTL6A/BAF53A, VPS72 and YEATS4/GAS41. Interacts with MLLT10/AF10. Also interacts with the SWI/SNF component SMARCB1/BAF47, TACC1 and TACC2, and the nuclear matrix protein NUMA1. As to expression, expressed in brain, heart, kidney, liver, lung, pancreas, placenta and skeletal muscle.

The protein resides in the nucleus. Functionally, chromatin reader component of the NuA4 histone acetyltransferase (HAT) complex, a complex involved in transcriptional activation of select genes principally by acetylation of nucleosomal histones H4 and H2A. Specifically recognizes and binds acylated histone H3, with a preference for histone H3 diacetylated at 'Lys-18' and 'Lys-27' (H3K18ac and H3K27ac) or histone H3 diacetylated at 'Lys-14' and 'Lys-27' (H3K14ac and H3K27ac). Also able to recognize and bind crotonylated histone H3. May also recognize and bind histone H3 succinylated at 'Lys-122' (H3K122succ); additional evidences are however required to confirm this result in vivo. Plays a key role in histone variant H2AZ1/H2A.Z deposition into specific chromatin regions: recognizes and binds H3K14ac and H3K27ac on the promoters of actively transcribed genes and recruits NuA4-related complex to deposit H2AZ1/H2A.Z. H2AZ1/H2A.Z deposition is required for maintenance of embryonic stem cell. This is YEATS domain-containing protein 4 from Homo sapiens (Human).